The chain runs to 502 residues: MGIKAEEISSLIKQQIENYESELKVSEVGTVIRIGDGIALAHGLDNAMAGELLEFSNGVMGMAQNLEEGNVGIVILGPYTDIKEGDEVRRTGRIMEVPVGEELIGRVVNPLGQPVDGQGPINTTKSRPIESPAFGVMARKSVHEPLQTGIKAIDALVPIGRGQRELIIGDRQVGKTSVAIDTILNQDGENMICIYVAIGQKESTVRGVVETLRKHGALDYTIVVTAAASQPAPLLFLAPFAGVSMAEEFMLQGKHVLIVYDDLSKQASAYRELSLLLRRPPGREAYPGDVFYLHSRLLERAAKLNETYQNGSITALPFVETQAGDISAYIPTNVISITDGQIFLQSDLFNSGVRPAINAGLSVSRVGGSAQIKAMKKVAGTLRLDLAAFRELESFAQFGSDLDKITLAKLERGKRTVEVLKQDLNKPLKVEKQVAILYALTKGHLDDIPVQDIVRFESEFLSWLDSNHTNVLDHVRTTKELAPDADYVAALTEFKKTFAKSE.

169–176 (GDRQVGKT) is a binding site for ATP.

Belongs to the ATPase alpha/beta chains family. F-type ATPases have 2 components, CF(1) - the catalytic core - and CF(0) - the membrane proton channel. CF(1) has five subunits: alpha(3), beta(3), gamma(1), delta(1), epsilon(1). CF(0) has three main subunits: a(1), b(2) and c(9-12). The alpha and beta chains form an alternating ring which encloses part of the gamma chain. CF(1) is attached to CF(0) by a central stalk formed by the gamma and epsilon chains, while a peripheral stalk is formed by the delta and b chains.

Its subcellular location is the cell membrane. The catalysed reaction is ATP + H2O + 4 H(+)(in) = ADP + phosphate + 5 H(+)(out). Functionally, produces ATP from ADP in the presence of a proton gradient across the membrane. The alpha chain is a regulatory subunit. In Lysinibacillus sphaericus (strain C3-41), this protein is ATP synthase subunit alpha.